The sequence spans 321 residues: Annexin A5 (321 aa).

Ala2 carries the post-translational modification N-acetylalanine. Annexin repeat units lie at residues 15–86 (FDER…ALMK), 87–158 (PSRL…VLLQ), 170–242 (AQVE…AVVK), and 246–317 (SIPA…LLCG). Lys29 is covalently cross-linked (Glycyl lysine isopeptide (Lys-Gly) (interchain with G-Cter in SUMO1); alternate). Residue Lys29 forms a Glycyl lysine isopeptide (Lys-Gly) (interchain with G-Cter in SUMO2); alternate linkage. Lys70, Lys76, Lys79, Lys97, and Lys101 each carry N6-acetyllysine. Lys290 bears the N6-succinyllysine mark. A [IL]-x-C-x-x-[DE] motif motif is present at residues 314-320 (LLCGGED).

The protein belongs to the annexin family. Monomer. Binds ATRX and EIF5B. In terms of processing, S-nitrosylation is induced by interferon-gamma and oxidatively-modified low-densitity lipoprotein (LDL(ox)) possibly implicating the iNOS-S100A8/9 transnitrosylase complex.

This protein is an anticoagulant protein that acts as an indirect inhibitor of the thromboplastin-specific complex, which is involved in the blood coagulation cascade. This chain is Annexin A5 (ANXA5), found in Bos taurus (Bovine).